The primary structure comprises 777 residues: Phosphoribosylformylglycinamidine synthase subunit PurL (777 aa).

Residue His-50 is part of the active site. ATP-binding residues include Tyr-53 and Lys-92. A Mg(2+)-binding site is contributed by Glu-94. Residues 95–98 and Arg-117 each bind substrate; that span reads SHNH. The Proton acceptor role is filled by His-96. Position 118 (Asp-118) interacts with Mg(2+). Residue Gln-241 participates in substrate binding. Residue Asp-269 coordinates Mg(2+). Residue 313–315 coordinates substrate; that stretch reads ESQ. 2 residues coordinate ATP: Asp-520 and Gly-557. Asn-558 contributes to the Mg(2+) binding site. Substrate is bound at residue Ser-560.

This sequence belongs to the FGAMS family. In terms of assembly, monomer. Part of the FGAM synthase complex composed of 1 PurL, 1 PurQ and 2 PurS subunits.

The protein localises to the cytoplasm. The enzyme catalyses N(2)-formyl-N(1)-(5-phospho-beta-D-ribosyl)glycinamide + L-glutamine + ATP + H2O = 2-formamido-N(1)-(5-O-phospho-beta-D-ribosyl)acetamidine + L-glutamate + ADP + phosphate + H(+). It functions in the pathway purine metabolism; IMP biosynthesis via de novo pathway; 5-amino-1-(5-phospho-D-ribosyl)imidazole from N(2)-formyl-N(1)-(5-phospho-D-ribosyl)glycinamide: step 1/2. Functionally, part of the phosphoribosylformylglycinamidine synthase complex involved in the purines biosynthetic pathway. Catalyzes the ATP-dependent conversion of formylglycinamide ribonucleotide (FGAR) and glutamine to yield formylglycinamidine ribonucleotide (FGAM) and glutamate. The FGAM synthase complex is composed of three subunits. PurQ produces an ammonia molecule by converting glutamine to glutamate. PurL transfers the ammonia molecule to FGAR to form FGAM in an ATP-dependent manner. PurS interacts with PurQ and PurL and is thought to assist in the transfer of the ammonia molecule from PurQ to PurL. The sequence is that of Phosphoribosylformylglycinamidine synthase subunit PurL from Trichormus variabilis (strain ATCC 29413 / PCC 7937) (Anabaena variabilis).